We begin with the raw amino-acid sequence, 215 residues long: CASP-like protein 1U3 (215 aa).

Over 1–13 (MHDEEKKEPKWVT) the chain is Cytoplasmic. The helical transmembrane segment at 14-34 (AVSIAGRIAGMGLAVAAAVLM) threads the bilayer. Over 35–68 (STASQCTVYYAAPAASAYGGAARARTVTYSDFPP) the chain is Extracellular. A helical membrane pass occupies residues 69–89 (FVFLVGAASIAAFLEAIAIFL). Residues 90–105 (VVWKKGKDKTTKVLMP) are Cytoplasmic-facing. Residues 106-126 (LLGVAVPALLYSATGAAFAAV) traverse the membrane as a helical segment. Over 127–161 (SDMSYCSANGKRVSICAGSAAAGGGVSGGTNFCSQ) the chain is Extracellular. Residues 162 to 182 (VHIAVYLSLAAAVAVSVAEVV) traverse the membrane as a helical segment. The Cytoplasmic portion of the chain corresponds to 183–215 (RGLGGSASGGGSDSDSSSSSESGGCDHGCHHKH). A disordered region spans residues 187-215 (GSASGGGSDSDSSSSSESGGCDHGCHHKH). Over residues 195-205 (DSDSSSSSESG) the composition is skewed to low complexity.

This sequence belongs to the Casparian strip membrane proteins (CASP) family. As to quaternary structure, homodimer and heterodimers.

The protein localises to the cell membrane. This is CASP-like protein 1U3 from Sorghum bicolor (Sorghum).